The chain runs to 744 residues: Prestin (744 aa).

At 1-75 the chain is on the cytoplasmic side; it reads MDHAEENEIP…PITKWLPAYK (75 aa). A helical transmembrane segment spans residues 76 to 104; that stretch reads FKEYVLGDLVSGISTGVLQLPQGLAFAML. Residues 105–108 are Extracellular-facing; the sequence is AAVP. Residues 109 to 126 form a helical membrane-spanning segment; sequence PVFGLYSSFYPVIMYCFF. The Cytoplasmic portion of the chain corresponds to 127 to 137; sequence GTSRHISIGPF. A helical membrane pass occupies residues 138–149; it reads AVISLMIGGVAV. The Extracellular segment spans residues 150-168; it reads RLVPDDIVIPGGVNATNGT. Residues 158 to 168 carry the Involved in motor function motif; it reads IPGGVNATNGT. N-linked (GlcNAc...) asparagine glycosylation is found at N163 and N166. A helical transmembrane segment spans residues 169–196; the sequence is EARDALRVKVAMSVTLLSGIIQFCLGVC. At 197–206 the chain is on the cytoplasmic side; the sequence is RFGFVAIYLT. The helical transmembrane segment at 207–230 threads the bilayer; it reads EPLVRGFTTAAAVHVFTSMLKYLF. Over 231–241 the chain is Extracellular; it reads GVKTKRYSGIF. An intramembrane region (helical) is located at residues 242–253; it reads SVVYSTVAVLQN. At 254–258 the chain is on the extracellular side; that stretch reads VKNLN. Residues 259–276 traverse the membrane as a helical segment; that stretch reads VCSLGVGLMVFGLLLGGK. Residues 277-291 lie on the Cytoplasmic side of the membrane; sequence EFNERFKEKLPAPIP. A helical transmembrane segment spans residues 292–307; it reads LEFFAVVMGTGISAGF. At 308–332 the chain is on the extracellular side; sequence NLHESYSVDVVGTLPLGLLPPANPD. Residues 333 to 359 form a helical membrane-spanning segment; sequence TSLFHLVYVDAIAIAIVGFSVTISMAK. Residues 360–370 lie on the Cytoplasmic side of the membrane; it reads TLANKHGYQVD. The helical transmembrane segment at 371–388 threads the bilayer; it reads GNQELIALGICNSIGSLF. The Extracellular segment spans residues 389-396; that stretch reads QTFSISCS. The helical transmembrane segment at 397–406 threads the bilayer; sequence LSRSLVQEGT. S398 provides a ligand contact to salicylate. Over 407 to 410 the chain is Cytoplasmic; it reads GGKT. Residues 411-431 form a helical membrane-spanning segment; that stretch reads QLAGCLASLMILLVILATGFL. The Extracellular segment spans residues 432–436; sequence FESLP. Residues 437–464 traverse the membrane as a helical segment; it reads QAVLSAIVIVNLKGMFMQFSDLPFFWRT. Position 465 (S465) is a topological domain, cytoplasmic. Residues 466 to 481 traverse the membrane as a helical segment; sequence KIELTIWLTTFVSSLF. The Extracellular segment spans residues 482–484; sequence LGL. Residues 485–504 form a helical membrane-spanning segment; sequence DYGLITAVIIALLTVIYRTQ. An extended region for STAS domain region spans residues 505-718; sequence SPSYTVLGQL…AVLGSQVREA (214 aa). Topologically, residues 505–744 are cytoplasmic; that stretch reads SPSYTVLGQL…PNATPTTPEA (240 aa). Residues 525 to 713 form the STAS domain; it reads AYEEVKEIPG…HSIHDAVLGS (189 aa). The segment at 720 to 744 is disordered; that stretch reads AEQETTVLPPQEDMEPNATPTTPEA.

The protein belongs to the SLC26A/SulP transporter (TC 2.A.53) family. In terms of assembly, homodimer. Interacts (via STAS domain) with CALM; this interaction is calcium-dependent and the STAS domain interacts with only one lobe of CALM which is an elongated conformation. Interacts with MYH1. In terms of tissue distribution, specifically expressed in outer hair cells of cochleae (at protein level). Not detected in other cells of the organ of Corti.

It is found in the lateral cell membrane. The enzyme catalyses 2 hydrogencarbonate(in) + chloride(out) = 2 hydrogencarbonate(out) + chloride(in). With respect to regulation, salicylate, an inhibitor of outer hair cell motility, acts as a competitive antagonist at the prestin anion-binding site. Its function is as follows. Voltage-sensitive motor protein that drives outer hair cell (OHC) electromotility (eM) and participates in sound amplification in the hearing organ. Converts changes in the transmembrane electric potential into mechanical displacements resulting in the coupling of its expansion to movement of a charged voltage sensor across the lipid membrane. The nature of the voltage sensor is not completely clear, and two models compete. In the first model, acts as an incomplete transporter where intracellular chloride anion acts as extrinsic voltage sensor that drives conformational change in the protein which is sufficient to produce a length change in the plane of the membrane and hence in the length of the OHC. The second model in which multiple charged amino acid residues are distributed at the intracellular and extracellular membrane interfaces that form an intrinsic voltage sensor, whose movement produces the non-linear capacitance (NLC). However, the effective voltage sensor may be the result of a hybrid voltage sensor assembled from intrinsic charge (charged residues) and extrinsic charge (bound anion). Notably, binding of anions to the anion-binding pocket partially neutralizes the intrinsic positive charge rather than to form an electrically negative sensor, therefore remaining charge may serve as voltage sensor that, after depolarization, moves from down (expanded state) to up (contracted) conformation, which is accompanied by an eccentric contraction of the intermembrane cross-sectional area of the protein as well as a major increase in the hydrophobic thickness of the protein having as consequences the plasma membrane thickening and the cell contraction after membrane depolarization. The anion-binding pocket transits from the inward-open (Down) state, where it is exposed toward the intracellular solvent in the absence of anion, to the occluded (Up) state upon anion binding. Salicylate competes for the anion-binding site and inhibits the voltage-sensor movement, and therefore inhibits the charge transfer and electromotility by displacing Cl(-) from the anion-binding site and by preventing the structural transitions to the contracted state. In addition, can act as a weak Cl(-)/HCO3(-) antiporter across the cell membrane and so regulate the intracellular pH of the outer hair cells (OHCs), while firstly found as being unable to mediate electrogenic anion transport. Moreover, supports a role in cardiac mechanical amplification serving as an elastic element to enhance the actomyosin- based sarcomere contraction system. The protein is Prestin of Rattus norvegicus (Rat).